The sequence spans 1180 residues: DNA-directed RNA polymerase subunit beta (1180 aa).

Acidic residues predominate over residues 1154 to 1164 (EMKELDDEDEQ). The tract at residues 1154–1180 (EMKELDDEDEQASDKLNLNIDSTESNV) is disordered. Residues 1167–1180 (DKLNLNIDSTESNV) are compositionally biased toward polar residues.

The protein belongs to the RNA polymerase beta chain family. As to quaternary structure, the RNAP catalytic core consists of 2 alpha, 1 beta, 1 beta' and 1 omega subunit. When a sigma factor is associated with the core the holoenzyme is formed, which can initiate transcription.

The catalysed reaction is RNA(n) + a ribonucleoside 5'-triphosphate = RNA(n+1) + diphosphate. Its function is as follows. DNA-dependent RNA polymerase catalyzes the transcription of DNA into RNA using the four ribonucleoside triphosphates as substrates. In Halalkalibacterium halodurans (strain ATCC BAA-125 / DSM 18197 / FERM 7344 / JCM 9153 / C-125) (Bacillus halodurans), this protein is DNA-directed RNA polymerase subunit beta.